A 449-amino-acid polypeptide reads, in one-letter code: MSHITFDYSKVLESFAGQHEIDFLQGQVTEADKLLREGTGPGSDFLGWLDLPENYDKEEFARILTAAEKIKSDSEVLVVIGIGGSYLGAKAAIDFLNHHFANLQTAKERKAPQILYAGNSISSTYLADLVEYVQDKEFSVNVISKSGTTTEPAIAFRVFKELLVKKYGQEEANKRIYATTDKVKGAVKVEADANNWETFVVPDNVGGRFSVLTAVGLLPIAASGADITALMEGANAARKDLSSDKISENIAYQYAAVRNVLYRKGYITEILANYEPSLQYFGEWWKQLAGESEGKDQKGIYPTSANFSTDLHSLGQFIQEGYRNLFETVIRVDNPRKNVIIPELAEDLDGLGYLQGKDVDFVNKKATDGVLLAHTDGGVPNMFVTLPVQDEFTLGYTIYFFELAIAVSGYMNAVNPFDQPGVEAYKRNMFALLGKPGFEALSAELNARL.

Glu291 serves as the catalytic Proton donor. Active-site residues include His312 and Lys426.

The protein belongs to the GPI family.

It localises to the cytoplasm. It carries out the reaction alpha-D-glucose 6-phosphate = beta-D-fructose 6-phosphate. It functions in the pathway carbohydrate biosynthesis; gluconeogenesis. It participates in carbohydrate degradation; glycolysis; D-glyceraldehyde 3-phosphate and glycerone phosphate from D-glucose: step 2/4. Catalyzes the reversible isomerization of glucose-6-phosphate to fructose-6-phosphate. In Streptococcus pyogenes serotype M18 (strain MGAS8232), this protein is Glucose-6-phosphate isomerase.